A 261-amino-acid polypeptide reads, in one-letter code: Thioesterase TesA (261 aa).

Active-site residues include S104, D208, and H236.

The protein belongs to the thioesterase family.

The enzyme catalyses a fatty acyl-CoA + H2O = a fatty acid + CoA + H(+). In terms of biological role, involved in the synthesis of both phthiocerol dimycocerosates (PDIMs) and phenolic glycolipids (PGLs), which are structurally related lipids non-covalently bound to the outer cell wall layer of M.tuberculosis and are important virulence factors. This is Thioesterase TesA (tesA) from Mycobacterium leprae (strain TN).